The sequence spans 199 residues: Protein-methionine-sulfoxide reductase heme-binding subunit MsrQ (199 aa).

The next 4 helical transmembrane spans lie at Trp-10–Ile-30, Leu-82–Ile-102, Pro-116–Thr-136, and Val-153–Ser-173.

The protein belongs to the MsrQ family. In terms of assembly, heterodimer of a catalytic subunit (MsrP) and a heme-binding subunit (MsrQ). FMN serves as cofactor. It depends on heme b as a cofactor.

The protein resides in the cell inner membrane. Its function is as follows. Part of the MsrPQ system that repairs oxidized periplasmic proteins containing methionine sulfoxide residues (Met-O), using respiratory chain electrons. Thus protects these proteins from oxidative-stress damage caused by reactive species of oxygen and chlorine generated by the host defense mechanisms. MsrPQ is essential for the maintenance of envelope integrity under bleach stress, rescuing a wide series of structurally unrelated periplasmic proteins from methionine oxidation, including the primary periplasmic chaperone SurA and the lipoprotein Pal. MsrQ provides electrons for reduction to the reductase catalytic subunit MsrP, using the quinone pool of the respiratory chain. This chain is Protein-methionine-sulfoxide reductase heme-binding subunit MsrQ, found in Salmonella enteritidis PT4 (strain P125109).